The sequence spans 467 residues: tRNA-2-methylthio-N(6)-dimethylallyladenosine synthase (467 aa).

The disordered stretch occupies residues 1-20; that stretch reads MSDDTTQIEPAMAQETSPRA. The MTTase N-terminal domain maps to 23-143; the sequence is RKVFVKTYGC…LPNALARVRG (121 aa). [4Fe-4S] cluster-binding residues include Cys32, Cys68, Cys106, Cys184, Cys188, and Cys191. The region spanning 170–402 is the Radical SAM core domain; the sequence is RKRGVSAFLT…QALLSAQQYA (233 aa). One can recognise a TRAM domain in the interval 405–467; it reads DSMIGRKMDV…TNSLIAQKLA (63 aa).

It belongs to the methylthiotransferase family. MiaB subfamily. Monomer. [4Fe-4S] cluster is required as a cofactor.

The protein resides in the cytoplasm. It catalyses the reaction N(6)-dimethylallyladenosine(37) in tRNA + (sulfur carrier)-SH + AH2 + 2 S-adenosyl-L-methionine = 2-methylsulfanyl-N(6)-dimethylallyladenosine(37) in tRNA + (sulfur carrier)-H + 5'-deoxyadenosine + L-methionine + A + S-adenosyl-L-homocysteine + 2 H(+). Its function is as follows. Catalyzes the methylthiolation of N6-(dimethylallyl)adenosine (i(6)A), leading to the formation of 2-methylthio-N6-(dimethylallyl)adenosine (ms(2)i(6)A) at position 37 in tRNAs that read codons beginning with uridine. This Brucella canis (strain ATCC 23365 / NCTC 10854 / RM-666) protein is tRNA-2-methylthio-N(6)-dimethylallyladenosine synthase.